We begin with the raw amino-acid sequence, 361 residues long: MSQKERPTFHRQEVNKTIWEVPVRYQNLSPVGSGAYGTVCSAYDEKTGLKVAVKKLSRPFQSIIHAKRTYRELRLLKHMKHENVIGLLDVFTPATSLEEFNDVYLVTHLMGADLNNIVKCQKLTDDHVQFLIYQILRGLKYIHSADIIHRDLKPSNLAVNEDCELKILDFGLARHTDDEMTGYVATRWYRAPEIMLNWMHYNMTVDIWSVGCIMAELLTGRTLFPGTDHINQLQQIMRLTGTPPASLISRMPSHEARTYINSLPQMPKRNFSEVFIGANPQAVDLLEKMLVLDTDKRITAAEALAHPYFAQYHDPDDEPEAEPFDQSFESRELDIEEWKRQTYEEVISFEPPVFDGDEMES.

Positions 25-309 constitute a Protein kinase domain; it reads YQNLSPVGSG…AAEALAHPYF (285 aa). Residues 31–39 and lysine 54 contribute to the ATP site; that span reads VGSGAYGTV. Residue aspartate 151 is the Proton acceptor of the active site. The residue at position 181 (threonine 181) is a Phosphothreonine; by MAP2K6. The short motif at 181–183 is the TXY element; it reads TGY. A Phosphotyrosine; by MAP2K6 modification is found at tyrosine 183.

This sequence belongs to the protein kinase superfamily. CMGC Ser/Thr protein kinase family. MAP kinase subfamily. Mg(2+) is required as a cofactor. Post-translationally, dually phosphorylated on Thr-181 and Tyr-183, which activates the enzyme. Exclusively expressed in the ovary.

It localises to the cytoplasm. It is found in the nucleus. The catalysed reaction is L-seryl-[protein] + ATP = O-phospho-L-seryl-[protein] + ADP + H(+). It catalyses the reaction L-threonyl-[protein] + ATP = O-phospho-L-threonyl-[protein] + ADP + H(+). With respect to regulation, activated by threonine and tyrosine phosphorylation by the dual specificity kinase, MKK6. Functionally, serine/threonine kinase which acts as an essential component of the MAP kinase signal transduction pathway. Mapk14a is one of the four p38 MAPKs which play an important role in the cascades of cellular responses evoked by extracellular stimuli such as pro-inflammatory cytokines or physical stress leading to direct activation of transcription factors. Accordingly, p38 MAPKs phosphorylate a broad range of proteins and it has been estimated that they may have approximately 200 to 300 substrates each. Some of the targets are downstream kinases which are activated through phosphorylation and further phosphorylate additional targets. This is Mitogen-activated protein kinase 14A (mapk14a) from Cyprinus carpio (Common carp).